Here is a 328-residue protein sequence, read N- to C-terminus: HTH-type transcriptional regulator MalR (328 aa).

The region spanning 2–57 (PVTIKDVAKAAGVSPSTVTRVIQNKSTISDETKKRVRKAMKELNYHPNLNARSLVS) is the HTH lacI-type domain. The segment at residues 5–24 (IKDVAKAAGVSPSTVTRVIQ) is a DNA-binding region (H-T-H motif). An inducer binding region spans residues 173-218 (TEYFIKKGCKRIAFIGGSKKLFVTKDRLTGYEQALKHYKLTTDNNR). Residues 282-291 (NLAAYVDINS) are dimerization.

Transcriptional repressor of the maltosaccharide utilization operons malxCD and malMP. This is HTH-type transcriptional regulator MalR (malR) from Streptococcus pneumoniae serotype 4 (strain ATCC BAA-334 / TIGR4).